The primary structure comprises 1186 residues: MYND-type zinc finger-containing chromatin reader ZMYND8 (1186 aa).

Basic and acidic residues predominate over residues 1–12 (MDISTRSKDPGS). A disordered region spans residues 1-57 (MDISTRSKDPGSAERTAQKRKFPSPPHSSNGHSPQDTSTSPIKKKKKPGLLNSNNKE). A required for interaction with CCNT1 region spans residues 1–850 (MDISTRSKDP…QQQQQQQNQQ (850 aa)). Residue Ser12 forms a Glycyl lysine isopeptide (Lys-Gly) (interchain with G-Cter in SUMO2) linkage. Position 24 is a phosphoserine (Ser24). Glycyl lysine isopeptide (Lys-Gly) (interchain with G-Cter in SUMO2) cross-links involve residues Lys56 and Lys70. Residues 75-268 (TDPVDVVPQD…YLAACQKRDN (194 aa)) are interaction with histone H3K4me0. The interval 75-406 (TDPVDVVPQD…VKLNFDMTAS (332 aa)) is interaction with histone H3K14ac. The PHD-type zinc-finger motif lies at 88-133 (DFYCWVCHREGQVLCCELCPRVYHAKCLRLTSEPEGDWFCPECEKI). The segment at 88-327 (DFYCWVCHRE…INNCYLMSKE (240 aa)) is required for interaction with histone H3 and histone H4. Residues Cys91, Cys94, Cys103, Cys106, His111, Cys114, Cys127, and Cys130 each contribute to the Zn(2+) site. Residues 145-252 (AMTMLTIEQL…KICEHEMNEI (108 aa)) enclose the Bromo domain. Zn(2+) is bound by residues Cys255, Cys258, and Cys274. The 51-residue stretch at 277–327 (PHPLVWAKLKGFPFWPAKALRDKDGQVDARFFGQHDRAWVPINNCYLMSKE) folds into the PWWP domain. Residue Lys390 forms a Glycyl lysine isopeptide (Lys-Gly) (interchain with G-Cter in SUMO2) linkage. Thr404 is modified (phosphothreonine). Ser406 bears the Phosphoserine mark. Residues 412-512 (SKPVLSGGTG…TTKTDKTSTT (101 aa)) are disordered. An N6-acetyllysine; alternate modification is found at Lys413. Lys413 participates in a covalent cross-link: Glycyl lysine isopeptide (Lys-Gly) (interchain with G-Cter in SUMO2); alternate. Residues Ser417, Ser425, and Ser432 each carry the phosphoserine modification. The span at 433–442 (PMSTNSSVHT) shows a compositional bias: polar residues. Residue Ser444 is modified to Phosphoserine. Lys453 participates in a covalent cross-link: Glycyl lysine isopeptide (Lys-Gly) (interchain with G-Cter in SUMO2). 6 positions are modified to phosphoserine: Ser460, Ser462, Ser465, Ser486, Ser490, and Ser495. Polar residues predominate over residues 472-489 (STASPASTKTGQAGSLSG). Residue Lys505 forms a Glycyl lysine isopeptide (Lys-Gly) (interchain with G-Cter in SUMO2) linkage. Ser514 and Ser523 each carry phosphoserine. A Glycyl lysine isopeptide (Lys-Gly) (interchain with G-Cter in SUMO2) cross-link involves residue Lys530. Thr541 is modified (phosphothreonine). At Ser547 the chain carries Phosphoserine. Lys549 participates in a covalent cross-link: Glycyl lysine isopeptide (Lys-Gly) (interchain with G-Cter in SUMO2). Thr563 carries the post-translational modification Phosphothreonine. The disordered stretch occupies residues 582-884 (TAVEHSDSED…ITQSPSTSTI (303 aa)). 2 stretches are compositionally biased toward basic and acidic residues: residues 585-597 (EHSD…KSDS) and 606-631 (DEQK…EPSA). Residues Lys611 and Lys645 each participate in a glycyl lysine isopeptide (Lys-Gly) (interchain with G-Cter in SUMO2) cross-link. Phosphoserine occurs at positions 652 and 655. The span at 656–696 (EKADPGAVKDKASPEPEKDFSEKAKPSPHPIKDKLKGKDET) shows a compositional bias: basic and acidic residues. A Glycyl lysine isopeptide (Lys-Gly) (interchain with G-Cter in SUMO2) cross-link involves residue Lys657. Residues Ser668, Ser682, Ser707, Ser709, and Ser737 each carry the phosphoserine modification. Positions 718–738 (GEDHSGREGRKNKKEPKEPSP) are enriched in basic and acidic residues. Thr746 carries the post-translational modification Phosphothreonine. Phosphoserine is present on residues Ser754 and Ser756. Positions 766 to 799 (SSAQTSAAGATATTSTSSTVTVTAPAPAATGSPV) are enriched in low complexity. Over residues 818–832 (VWNSSSKFQTSSQKW) the composition is skewed to polar residues. Residues 835–857 (QKMQRQQQQQQQQNQQQQPQSSQ) show a composition bias toward low complexity. Residues 873-884 (KEITQSPSTSTI) show a composition bias toward polar residues. A required for homodimerization region spans residues 875–1047 (ITQSPSTSTI…YCCWNTSYCD (173 aa)). Residues Cys1028, Cys1031, Cys1039, Cys1040, Cys1046, Cys1050, His1058, and Cys1062 each coordinate Zn(2+). The MYND-type zinc finger occupies 1028-1062 (CANCKKEAIFYCCWNTSYCDYPCQQAHWPEHMKSC). Residues 1028 to 1062 (CANCKKEAIFYCCWNTSYCDYPCQQAHWPEHMKSC) form a required for recruitment to DNA damage sites and for interaction with the NuRD complex, CHD4, HDAC1, HDAC2 and KDM1A region. The disordered stretch occupies residues 1071–1186 (QEADAEVNTE…KESRLDTFWD (116 aa)). The segment covering 1085 to 1103 (SSQGSSSSTQSAPSETASA) has biased composition (low complexity). Basic and acidic residues predominate over residues 1104-1116 (SKEKETSAEKSKE). Lys1115 is covalently cross-linked (Glycyl lysine isopeptide (Lys-Gly) (interchain with G-Cter in SUMO2)). At Ser1119 the chain carries Phosphoserine. Over residues 1121–1140 (LDLSGSRETPSSILLGSNQG) the composition is skewed to polar residues. Phosphoserine is present on Ser1141. The tract at residues 1147–1186 (NKSSWSSSDEKRGSTRSDHNTSTSTKSLLPKESRLDTFWD) is interaction with PRKCB1. Composition is skewed to basic and acidic residues over residues 1154-1165 (SDEKRGSTRSDH) and 1175-1186 (LPKESRLDTFWD).

In terms of assembly, monomer and homodimer. Interacts with NuRD subcomplexes containing GATAD2A. Interacts with the histone deacetylase NuRD complex subunit CHD4; the interaction is direct, appears to occur with monomeric ZMYND8, and is increased following DNA damage. Interacts (via N-terminus) with the P-TEFb complex subunit CCNT1 (via central region); the interaction is direct and the association appears to occur between homodimeric ZMYND8 and the activated form of the P-TEFb complex. Interacts (via N-terminus) with DBN1 (via ADF-H domain); the interaction leads to sequestering of ZMYND8 in the cytoplasm. Interacts with the P-TEFb complex subunit CDK9; the association appears to occur between homodimeric ZMYND8 and the activated form of the P-TEFb complex. Interacts with EZH2; the interaction is dependent on the presence of chromatin. Interacts (via MYND domain) with the NuRD complex subunit GATAD2A. Interacts with histone H3 (via N-terminus) that is both methylated at 'Lys-4' (H3K4me1) and acetylated at 'Lys-14' (H3K14ac), with histone H3 (via N-terminus) unmodified at 'Lys-4' (H3K4me0) and acetylated at 'Lys-14' (H3K14ac), and with histone H3 (via N-terminus) di-methylated at 'Lys-36' (H3K36me2). Interacts (via Bromo domain) with histone H4 acetylated at 'Lys-16' (H4K16ac). Interacts with HDAC1. Interacts with HDAC2. Interacts with KDM1A. Interacts with KDM5C. Interacts with KDM5D. Interacts in vitro with PRKCB. Interacts with RNA polymerase II subunit POLR2A phosphorylated at 'Ser-5'. Interacts with ZNF592. Interacts with ZNF687. Does not interact with GATAD2B. In terms of tissue distribution, expressed in neurons (at protein level). Absent in astrocytes (at protein level). Expressed in all tissues examined with highest expression in brain, lung, pancreas, and placenta. Expressed in cutaneous T-cell lymphomas (CTCL).

The protein localises to the nucleus. The protein resides in the chromosome. Its subcellular location is the cytoplasm. Its function is as follows. Chromatin reader that recognizes dual histone modifications such as histone H3.1 dimethylated at 'Lys-36' and histone H4 acetylated at 'Lys-16' (H3.1K36me2-H4K16ac) and histone H3 methylated at 'Lys-4' and histone H4 acetylated at 'Lys-14' (H3K4me1-H3K14ac). May act as a transcriptional corepressor for KDM5D by recognizing the dual histone signature H3K4me1-H3K14ac. May also act as a transcriptional corepressor for KDM5C and EZH2. Recognizes acetylated histone H4 and recruits the NuRD chromatin remodeling complex to damaged chromatin for transcriptional repression and double-strand break repair by homologous recombination. Also activates transcription elongation by RNA polymerase II through recruiting the P-TEFb complex to target promoters. Localizes to H3.1K36me2-H4K16ac marks at all-trans-retinoic acid (ATRA)-responsive genes and positively regulates their expression. Promotes neuronal differentiation by associating with regulatory regions within the MAPT gene, to enhance transcription of a protein-coding MAPT isoform and suppress the non-coding MAPT213 isoform. Suppresses breast cancer, and prostate cancer cell invasion and metastasis. The chain is MYND-type zinc finger-containing chromatin reader ZMYND8 (ZMYND8) from Homo sapiens (Human).